Consider the following 142-residue polypeptide: MGMMQEFKEFAIKGNVIDLAVGVIIGAAFSKIVDSVVGDLIMPVVGAVIGKLDFSNMFVVLRSVPPGIPTTLDALKKAGVPVFAYGNFITVAVNFAILAFIIFLMVKQINRLKRREVVKPTTAPAEDIMLLREIRDSLKKQA.

2 helical membrane passes run 10-30 (FAIK…AAFS) and 86-106 (GNFI…FLMV).

The protein belongs to the MscL family. Homopentamer.

The protein resides in the cell inner membrane. Its function is as follows. Channel that opens in response to stretch forces in the membrane lipid bilayer. May participate in the regulation of osmotic pressure changes within the cell. The chain is Large-conductance mechanosensitive channel from Polaromonas naphthalenivorans (strain CJ2).